The following is a 155-amino-acid chain: Catabolic 3-dehydroquinase (155 aa).

The Proton acceptor role is filled by tyrosine 24. Residues asparagine 75, histidine 81, and aspartate 88 each contribute to the substrate site. Histidine 101 (proton donor) is an active-site residue. Substrate is bound by residues 102–103 (VS) and arginine 112.

It belongs to the type-II 3-dehydroquinase family. In terms of assembly, homododecamer. Adopts a ring-like structure, composed of an arrangement of two hexameric rings stacked on top of one another.

It catalyses the reaction 3-dehydroquinate = 3-dehydroshikimate + H2O. It functions in the pathway aromatic compound metabolism; 3,4-dihydroxybenzoate biosynthesis; 3,4-dihydroxybenzoate from 3-dehydroquinate: step 1/2. Is involved in the catabolism of quinate. Allows the utilization of quinate as carbon source via the beta-ketoadipate pathway. This Penicillium rubens (strain ATCC 28089 / DSM 1075 / NRRL 1951 / Wisconsin 54-1255) (Penicillium chrysogenum) protein is Catabolic 3-dehydroquinase.